Consider the following 245-residue polypeptide: MWSVRMRASKKENNIEKHISGAEGIYDYSQIERVLKQLFKRAFEHSKGKPDKVVITVERINEEIQTVSALPVNTFFTNSPEEAFCLISEKLSSIGISDKALFSAFEVIKKYPMRGATLIDSITGERLERDKTRGIRVSRIHMDKRKRMKLIRQIKNLSTQPQRVIEAITIASKVASYPEVVAELCISDNPDYTIGYIASRDLGYLRITNIKNKGETIGGRAFFVKTPCDIEKLTNYLERKPVLVI.

This sequence belongs to the BioW family. As to quaternary structure, homodimer. Requires Mg(2+) as cofactor.

It carries out the reaction heptanedioate + ATP + CoA = 6-carboxyhexanoyl-CoA + AMP + diphosphate. The protein operates within metabolic intermediate metabolism; pimeloyl-CoA biosynthesis; pimeloyl-CoA from pimelate: step 1/1. In terms of biological role, catalyzes the transformation of pimelate into pimeloyl-CoA with concomitant hydrolysis of ATP to AMP. The polypeptide is 6-carboxyhexanoate--CoA ligase (Thermodesulfovibrio yellowstonii (strain ATCC 51303 / DSM 11347 / YP87)).